The sequence spans 72 residues: UPF0270 protein Ent638_3781 (72 aa).

The protein belongs to the UPF0270 family.

The sequence is that of UPF0270 protein Ent638_3781 from Enterobacter sp. (strain 638).